A 562-amino-acid chain; its full sequence is Sesquiterpene synthase (562 aa).

Mg(2+)-binding residues include aspartate 315, aspartate 319, and glutamate 467. The DDXXD motif motif lies at 315–319; sequence DDIYD.

The protein belongs to the terpene synthase family. Tpsa subfamily. Mg(2+) is required as a cofactor. The cofactor is Mn(2+).

Catalyzes the formation of beta-elemol, guaiol and bulnesol. This is Sesquiterpene synthase from Santalum spicatum (Australian sandalwood).